Reading from the N-terminus, the 289-residue chain is Protease HtpX homolog (289 aa).

Transmembrane regions (helical) follow at residues 11–31 (AALF…IGAG) and 36–54 (APIW…YGYW). His-138 provides a ligand contact to Zn(2+). Glu-139 is an active-site residue. Zn(2+) is bound at residue His-142. 2 consecutive transmembrane segments (helical) span residues 153-173 (VAAA…FFGG) and 182-202 (LAMI…QMAI). Glu-207 provides a ligand contact to Zn(2+).

The protein belongs to the peptidase M48B family. Zn(2+) is required as a cofactor.

Its subcellular location is the cell membrane. The sequence is that of Protease HtpX homolog from Pseudarthrobacter chlorophenolicus (strain ATCC 700700 / DSM 12829 / CIP 107037 / JCM 12360 / KCTC 9906 / NCIMB 13794 / A6) (Arthrobacter chlorophenolicus).